Reading from the N-terminus, the 159-residue chain is MKPIAIYPGTFDPLTNGHVDIIERALPLFNKIIVACAPTSRKDPHLKLEERVNLIADVLTDERVEVLPLTGLLVDFAKTHQANFILRGLRAVSDFDYEFQLAHMNYQLSPEIETIFLPAREGYSYVSGTMVREIVTLGGDVSPFVPPLVARHLQKRREK.

Position 10 (threonine 10) interacts with substrate. ATP-binding positions include threonine 10 to phenylalanine 11 and histidine 18. Substrate is bound by residues lysine 42, leucine 73, and arginine 87. Residues glycine 88 to arginine 90, glutamate 98, and tyrosine 123 to threonine 129 each bind ATP.

Belongs to the bacterial CoaD family. Homohexamer. Mg(2+) serves as cofactor.

It is found in the cytoplasm. The catalysed reaction is (R)-4'-phosphopantetheine + ATP + H(+) = 3'-dephospho-CoA + diphosphate. The protein operates within cofactor biosynthesis; coenzyme A biosynthesis; CoA from (R)-pantothenate: step 4/5. In terms of biological role, reversibly transfers an adenylyl group from ATP to 4'-phosphopantetheine, yielding dephospho-CoA (dPCoA) and pyrophosphate. In Coxiella burnetii (strain CbuK_Q154) (Coxiella burnetii (strain Q154)), this protein is Phosphopantetheine adenylyltransferase.